Here is a 692-residue protein sequence, read N- to C-terminus: MKIFCSRANPTTGSVEWLEEDEHYDYHQEIARSSYADMLHDKDRNVKYYQGIRAAVSRVKDRGQKALVLDIGTGTGLLSMMAVTAGADFCYAIEVFKPMADAAVKIVEKNGFSDKIKVINKHSTEVTVGPEGDMPCRANILVTELFDTELIGEGALPSYEHAHRHLVEENCEAVPHRATVYAQLVESGRMWSWNKLFPIHVQTSLGEQVIVPPVDVESCPGAPSVCDIQLNQVSPADFTVLSDVLPMFSIDFSKQVSSSAACHSRRFEPLTSGRAQVVLSWWDIEMDPEGKIKCTMAPFWAHSDPEEMQWRDHWMQCVYFLPQEEPVVQGSALYLVAHHDDYCVWYSLQRTSPEKNERVRQMRPVCDCQAHLLWNRPRFGEINDQDRTDRYVQALRTVLKPDSVCLCVSDGSLLSVLAHHLGVEQVFTVESSAASHKLLRKIFKANHLEDKINIIEKRPELLTNEDLQGRKVSLLLGEPFFTTSLLPWHNLYFWYVRTAVDQHLGPGAMVMPQAASLHAVVVEFRDLWRIRSPCGDCEGFDVHIMDDMIKRALDFRESREAEPHPLWEYPCRSLSEPWQILTFDFQQPVPLQPLCAEGTVELRRPGQSHAAVLWMEYHLTPECTLSTGLLEPADPEGGCCWNPHCKQAVYFFSPAPDPRALLGGPRTVSYAVEFHPDTGDIIMEFRHADTPD.

2 SAM-dependent MTase PRMT-type domains span residues 14 to 345 (SVEW…YCVW) and 358 to 684 (RVRQ…IIME). The residue at position 32 (arginine 32) is an Omega-N-methylarginine. Active-site residues include glutamate 144 and glutamate 153.

The protein belongs to the class I-like SAM-binding methyltransferase superfamily. Protein arginine N-methyltransferase family. PRMT7 subfamily. Homodimer and heterodimer. Interacts with CTCFL. Interacts with PRMT5 and SNRPD3.

The protein resides in the cytoplasm. The protein localises to the cytosol. Its subcellular location is the nucleus. The catalysed reaction is L-arginyl-[protein] + S-adenosyl-L-methionine = N(omega)-methyl-L-arginyl-[protein] + S-adenosyl-L-homocysteine + H(+). Its function is as follows. Arginine methyltransferase that can both catalyze the formation of omega-N monomethylarginine (MMA) and symmetrical dimethylarginine (sDMA), with a preference for the formation of MMA. Specifically mediates the symmetrical dimethylation of arginine residues in the small nuclear ribonucleoproteins Sm D1 (SNRPD1) and Sm D3 (SNRPD3); such methylation being required for the assembly and biogenesis of snRNP core particles. Specifically mediates the symmetric dimethylation of histone H4 'Arg-3' to form H4R3me2s. Plays a role in gene imprinting by being recruited by CTCFL at the H19 imprinted control region (ICR) and methylating histone H4 to form H4R3me2s, possibly leading to recruit DNA methyltransferases at these sites. May also play a role in embryonic stem cell (ESC) pluripotency. Also able to mediate the arginine methylation of histone H2A and myelin basic protein (MBP) in vitro; the relevance of such results is however unclear in vivo. This is Protein arginine N-methyltransferase 7 (PRMT7) from Homo sapiens (Human).